An 860-amino-acid chain; its full sequence is Leucine--tRNA ligase (860 aa).

The 'HIGH' region signature appears at 42-52; it reads PYPSGRLHMGH. Positions 619–623 match the 'KMSKS' region motif; the sequence is KMSKS. K622 provides a ligand contact to ATP.

The protein belongs to the class-I aminoacyl-tRNA synthetase family.

Its subcellular location is the cytoplasm. It catalyses the reaction tRNA(Leu) + L-leucine + ATP = L-leucyl-tRNA(Leu) + AMP + diphosphate. This chain is Leucine--tRNA ligase, found in Escherichia coli O17:K52:H18 (strain UMN026 / ExPEC).